A 379-amino-acid polypeptide reads, in one-letter code: Tryptophan--tRNA ligase, mitochondrial (379 aa).

ATP contacts are provided by residues glutamine 42 and 48–51 (HLGN). The short motif at 43-51 (PTGCFHLGN) is the 'HIGH' region element. Aspartate 184 contacts L-tryptophan. ATP-binding positions include 196–198 (GDD), valine 235, 244–248 (KMSKS), and lysine 247. The short motif at 244-248 (KMSKS) is the 'KMSKS' region element.

This sequence belongs to the class-I aminoacyl-tRNA synthetase family. Homodimer.

The protein resides in the mitochondrion matrix. It carries out the reaction tRNA(Trp) + L-tryptophan + ATP = L-tryptophyl-tRNA(Trp) + AMP + diphosphate + H(+). Functionally, mitochondrial aminoacyl-tRNA synthetase that catalyzes the attachment of tryptophan to tRNA(Trp). In Saccharomyces cerevisiae (strain ATCC 204508 / S288c) (Baker's yeast), this protein is Tryptophan--tRNA ligase, mitochondrial (MSW1).